Here is a 397-residue protein sequence, read N- to C-terminus: Phosphoglycerate kinase (397 aa).

Substrate-binding positions include 21-23, Arg-36, 59-62, Arg-118, and Arg-151; these read DFN and HCGR. Residues Lys-201, Glu-323, and 353 to 356 contribute to the ATP site; that span reads GGDT.

It belongs to the phosphoglycerate kinase family. In terms of assembly, monomer.

It is found in the cytoplasm. It catalyses the reaction (2R)-3-phosphoglycerate + ATP = (2R)-3-phospho-glyceroyl phosphate + ADP. Its pathway is carbohydrate degradation; glycolysis; pyruvate from D-glyceraldehyde 3-phosphate: step 2/5. This chain is Phosphoglycerate kinase, found in Bartonella tribocorum (strain CIP 105476 / IBS 506).